Consider the following 346-residue polypeptide: Holliday junction branch migration complex subunit RuvB (346 aa).

Residues 1–182 (MTRVISGEPQ…FGIPIRLEFY (182 aa)) are large ATPase domain (RuvB-L). Residues leucine 21, arginine 22, glycine 63, lysine 66, threonine 67, threonine 68, arginine 172, tyrosine 182, and arginine 219 each contribute to the ATP site. Threonine 67 is a binding site for Mg(2+). Residues 183–253 (TPAELRHVLQ…AAAMALARLE (71 aa)) are small ATPAse domain (RuvB-S). The tract at residues 256–346 (ESGLDSLDRR…QAQGALFDEG (91 aa)) is head domain (RuvB-H). Residues arginine 292, arginine 311, and arginine 316 each coordinate DNA.

This sequence belongs to the RuvB family. Homohexamer. Forms an RuvA(8)-RuvB(12)-Holliday junction (HJ) complex. HJ DNA is sandwiched between 2 RuvA tetramers; dsDNA enters through RuvA and exits via RuvB. An RuvB hexamer assembles on each DNA strand where it exits the tetramer. Each RuvB hexamer is contacted by two RuvA subunits (via domain III) on 2 adjacent RuvB subunits; this complex drives branch migration. In the full resolvosome a probable DNA-RuvA(4)-RuvB(12)-RuvC(2) complex forms which resolves the HJ.

It localises to the cytoplasm. It catalyses the reaction ATP + H2O = ADP + phosphate + H(+). The RuvA-RuvB-RuvC complex processes Holliday junction (HJ) DNA during genetic recombination and DNA repair, while the RuvA-RuvB complex plays an important role in the rescue of blocked DNA replication forks via replication fork reversal (RFR). RuvA specifically binds to HJ cruciform DNA, conferring on it an open structure. The RuvB hexamer acts as an ATP-dependent pump, pulling dsDNA into and through the RuvAB complex. RuvB forms 2 homohexamers on either side of HJ DNA bound by 1 or 2 RuvA tetramers; 4 subunits per hexamer contact DNA at a time. Coordinated motions by a converter formed by DNA-disengaged RuvB subunits stimulates ATP hydrolysis and nucleotide exchange. Immobilization of the converter enables RuvB to convert the ATP-contained energy into a lever motion, pulling 2 nucleotides of DNA out of the RuvA tetramer per ATP hydrolyzed, thus driving DNA branch migration. The RuvB motors rotate together with the DNA substrate, which together with the progressing nucleotide cycle form the mechanistic basis for DNA recombination by continuous HJ branch migration. Branch migration allows RuvC to scan DNA until it finds its consensus sequence, where it cleaves and resolves cruciform DNA. The chain is Holliday junction branch migration complex subunit RuvB from Caulobacter vibrioides (strain ATCC 19089 / CIP 103742 / CB 15) (Caulobacter crescentus).